The primary structure comprises 229 residues: Platelet-activating factor acetylhydrolase IB subunit alpha2 (229 aa).

At serine 2 the chain carries N-acetylserine. Serine 2 carries the phosphoserine modification. Residue serine 48 is part of the active site. Residue serine 64 is modified to Phosphoserine. Residues aspartate 193 and histidine 196 contribute to the active site. Threonine 220 carries the phosphothreonine modification.

Belongs to the 'GDSL' lipolytic enzyme family. Platelet-activating factor acetylhydrolase IB beta/gamma subunits subfamily. In terms of assembly, forms a catalytic dimer which is either homodimer (alpha2/alpha2 homodimer) or heterodimer with PAFAH1B3 (alpha2/alpha1 heterodimer). Component of the cytosolic (PAF-AH (I)) heterotetrameric enzyme, which is composed of PAFAH1B1 (beta), PAFAH1B2 (alpha2) and PAFAH1B3 (alpha1) subunits. The catalytic activity of the enzyme resides in the alpha1 (PAFAH1B3) and alpha2 (PAFAH1B2) subunits, whereas the beta subunit (PAFAH1B1) has regulatory activity. Trimer formation is not essential for the catalytic activity. Interacts (homodimer form) with PAFAH1B1 (homodimer form); PAFAH1B2 competes with NDEL1 for PAFAH1B1 binding. Interacts with VLDLR; this interaction may modulate the Reelin pathway.

Its subcellular location is the cytoplasm. The enzyme catalyses a 1-O-alkyl-2-acetyl-sn-glycero-3-phosphocholine + H2O = a 1-O-alkyl-sn-glycero-3-phosphocholine + acetate + H(+). The catalysed reaction is 1-O-hexadecyl-2-acetyl-sn-glycero-3-phosphocholine + H2O = 1-O-hexadecyl-sn-glycero-3-phosphocholine + acetate + H(+). It carries out the reaction 1-O-hexadecyl-2-acetyl-sn-glycero-3-phosphate + H2O = 1-O-hexadecyl-sn-glycero-3-phosphate + acetate + H(+). It catalyses the reaction 1-O-hexadecyl-2-acetyl-sn-glycero-3-phosphoethanolamine + H2O = 1-O-hexadecyl-sn-glycero-3-phosphoethanolamine + acetate + H(+). With respect to regulation, beta subunit (PAFAH1B1) stimulates the acetylhydrolase activity of the alpha2/alpha2 catalytic homodimer. Its function is as follows. Alpha2 catalytic subunit of the cytosolic type I platelet-activating factor (PAF) acetylhydrolase (PAF-AH (I)) heterotetrameric enzyme that catalyzes the hydrolyze of the acetyl group at the sn-2 position of PAF and its analogs and modulates the action of PAF. The activity and substrate specificity of PAF-AH (I) are affected by its subunit composition. The alpha2/alpha2 homodimer (PAFAH1B2/PAFAH1B2 homodimer) hydrolyzes PAF and 1-O-alkyl-2-acetyl-sn-glycero-3-phosphorylethanolamine (AAGPE) more efficiently than 1-O-alkyl-2-acetyl-sn-glycero-3-phosphoric acid (AAGPA). In contrast, the alpha1/alpha2 heterodimer(PAFAH1B3/PAFAH1B3 heterodimer) hydrolyzes AAGPA more efficiently than PAF, but has little hydrolytic activity towards AAGPE. May play a role in male germ cell meiosis during the late pachytenestage and meiotic divisions as well as early spermiogenesis. The chain is Platelet-activating factor acetylhydrolase IB subunit alpha2 from Pongo abelii (Sumatran orangutan).